Reading from the N-terminus, the 228-residue chain is MDVLLSLLSEFGFERLSSELSLPIVVHSVPGGGKSSLIRKLINKDRRFSAYTFGLEDCESITGVRIKKAHASIPRSEFVVFDEYIEGDTPPWAFAVFADPLQGGPGPVLRAHFIKRRSHRFGKCTAQLLNDLSYEVESDLADVVQIQGLYETDLQGTVVYYEACVGNLLRAHSVPAYYISEIRGQTFESVTFVTSENYPVDRALAFQCLTRHRSSLLILSPNATYTAS.

A (+)RNA virus helicase ATP-binding domain is found at 1–132 (MDVLLSLLSE…KCTAQLLNDL (132 aa)). The (+)RNA virus helicase C-terminal domain maps to 133–228 (SYEVESDLAD…LSPNATYTAS (96 aa)).

It belongs to the Tymovirales TGBp1 protein family. In terms of assembly, homodimer and homooligomer. Interacts with capsid protein. Interacts with host AGO1; this interaction targets the host protein for degradation, thereby suppressing the antiviral RNA silencing.

The protein resides in the host cytoplasm. Its function is as follows. Transports viral genome to neighboring plant cells directly through plasmosdesmata, without any budding. The movement protein allows efficient cell to cell propagation, by bypassing the host cell wall barrier. Increases plasmodesma size exclusion limit. Acts as a suppressor of RNA-mediated gene silencing, also known as post-transcriptional gene silencing (PTGS), a mechanism of plant viral defense that limits the accumulation of viral RNAs. This chain is Movement and silencing protein TGBp1, found in Lilium (LSV).